The sequence spans 235 residues: Proteasome subunit beta type-1 (235 aa).

The propeptide occupies 1–20 (MSRLGFEQFPDYQVPGMKHP).

This sequence belongs to the peptidase T1B family. The 26S proteasome consists of a 20S proteasome core and two 19S regulatory subunits. The 20S proteasome core is composed of 28 subunits that are arranged in four stacked rings, resulting in a barrel-shaped structure. The two end rings are each formed by seven alpha subunits, and the two central rings are each formed by seven beta subunits. The catalytic chamber with the active sites is on the inside of the barrel.

The protein resides in the cytoplasm. Its subcellular location is the nucleus. Its function is as follows. Non-catalytic component of the proteasome, a multicatalytic proteinase complex which is characterized by its ability to cleave peptides with Arg, Phe, Tyr, Leu, and Glu adjacent to the leaving group at neutral or slightly basic pH. The proteasome has an ATP-dependent proteolytic activity. This is Proteasome subunit beta type-1 (Prosbeta6) from Drosophila melanogaster (Fruit fly).